The following is a 295-amino-acid chain: 4-diphosphocytidyl-2-C-methyl-D-erythritol kinase (295 aa).

Lys-15 is a catalytic residue. Position 101–111 (101–111) interacts with ATP; the sequence is PIAAGLGGGSS. Asp-143 is an active-site residue.

The protein belongs to the GHMP kinase family. IspE subfamily.

The catalysed reaction is 4-CDP-2-C-methyl-D-erythritol + ATP = 4-CDP-2-C-methyl-D-erythritol 2-phosphate + ADP + H(+). Its pathway is isoprenoid biosynthesis; isopentenyl diphosphate biosynthesis via DXP pathway; isopentenyl diphosphate from 1-deoxy-D-xylulose 5-phosphate: step 3/6. Catalyzes the phosphorylation of the position 2 hydroxy group of 4-diphosphocytidyl-2C-methyl-D-erythritol. The polypeptide is 4-diphosphocytidyl-2-C-methyl-D-erythritol kinase (Caulobacter vibrioides (strain ATCC 19089 / CIP 103742 / CB 15) (Caulobacter crescentus)).